We begin with the raw amino-acid sequence, 267 residues long: Glucosamine-6-phosphate deaminase (267 aa).

Asp72 serves as the catalytic Proton acceptor; for enolization step. Asp141 functions as the For ring-opening step in the catalytic mechanism. The active-site Proton acceptor; for ring-opening step is His143. The active-site For ring-opening step is the Glu148.

Belongs to the glucosamine/galactosamine-6-phosphate isomerase family. NagB subfamily.

It carries out the reaction alpha-D-glucosamine 6-phosphate + H2O = beta-D-fructose 6-phosphate + NH4(+). The protein operates within amino-sugar metabolism; N-acetylneuraminate degradation; D-fructose 6-phosphate from N-acetylneuraminate: step 5/5. Its activity is regulated as follows. Allosterically activated by N-acetylglucosamine 6-phosphate (GlcNAc6P). Functionally, catalyzes the reversible isomerization-deamination of glucosamine 6-phosphate (GlcN6P) to form fructose 6-phosphate (Fru6P) and ammonium ion. This chain is Glucosamine-6-phosphate deaminase, found in Borrelia hermsii (strain HS1 / DAH).